Consider the following 551-residue polypeptide: Peptidyl-prolyl cis-trans isomerase-like 4 (551 aa).

The region spanning 1–185 is the PPIase cyclophilin-type domain; it reads MSVLLETSLG…RDIRIRHVVV (185 aa). The disordered stretch occupies residues 54–88; the sequence is GDPSNTGKGGASIWSQLPSTSQDSSTSTYFTPESS. A compositionally biased stretch (polar residues) spans 66–88; sequence IWSQLPSTSQDSSTSTYFTPESS. Residues 262 to 340 enclose the RRM domain; the sequence is NILFVCKLNP…RRIWVDFSQS (79 aa). The tract at residues 352 to 551 is disordered; that stretch reads RNAGSDAPRA…RQRSRDGSRR (200 aa). Basic and acidic residues-rich tracts occupy residues 384–397 and 408–454; these read KRGDDRRHDRRDQP and SRQD…SHRD. Basic residues predominate over residues 455–464; it reads HERHHLSRHV. Over residues 465–551 the composition is skewed to basic and acidic residues; sequence RPSDEGESKC…RQRSRDGSRR (87 aa).

This sequence belongs to the cyclophilin-type PPIase family. PPIL4 subfamily.

It is found in the nucleus. The enzyme catalyses [protein]-peptidylproline (omega=180) = [protein]-peptidylproline (omega=0). Functionally, PPIases accelerate the folding of proteins. It catalyzes the cis-trans isomerization of proline imidic peptide bonds in oligopeptides. The sequence is that of Peptidyl-prolyl cis-trans isomerase-like 4 (CYP6) from Mycosarcoma maydis (Corn smut fungus).